Here is a 317-residue protein sequence, read N- to C-terminus: Melanocyte-stimulating hormone receptor (317 aa).

The Extracellular segment spans residues Met1–Glu37. An N-linked (GlcNAc...) asparagine glycan is attached at Asn29. Residues Val38–Ile63 form a helical membrane-spanning segment. At Ala64–Pro72 the chain is on the cytoplasmic side. The chain crosses the membrane as a helical span at residues Met73–Leu93. Residues Glu94–Asn118 lie on the Extracellular side of the membrane. A helical membrane pass occupies residues Thr119–Val140. Topologically, residues Asp141–Arg163 are cytoplasmic. The chain crosses the membrane as a helical span at residues Ala164–Cys183. Topologically, residues Asp184–Cys191 are extracellular. Residues Leu192–Leu211 form a helical membrane-spanning segment. The Cytoplasmic portion of the chain corresponds to Ala212–Ala240. Residues Ala241 to Leu266 form a helical membrane-spanning segment. Topologically, residues Cys267–Asn279 are extracellular. A helical transmembrane segment spans residues Phe280–Phe300. Topologically, residues Arg301–Trp317 are cytoplasmic. Residue Cys315 is the site of S-palmitoyl cysteine attachment.

The protein belongs to the G-protein coupled receptor 1 family. In terms of assembly, interacts with MGRN1, but does not undergo MGRN1-mediated ubiquitination; this interaction competes with GNAS-binding and thus inhibits agonist-induced cAMP production. Interacts with OPN3; the interaction results in a decrease in MC1R-mediated cAMP signaling and ultimately a decrease in melanin production in melanocytes.

It localises to the cell membrane. In terms of biological role, receptor for MSH (alpha, beta and gamma) and ACTH. The activity of this receptor is mediated by G proteins which activate adenylate cyclase. Mediates melanogenesis, the production of eumelanin (black/brown) and phaeomelanin (red/yellow), via regulation of cAMP signaling in melanocytes. The chain is Melanocyte-stimulating hormone receptor (MC1R) from Alouatta caraya (Black howler monkey).